Reading from the N-terminus, the 249-residue chain is Probable GDP-mannose transporter 2 (249 aa).

The Lumenal segment spans residues 1–15 (MIYTSSKSLQYLAVP). A helical membrane pass occupies residues 16-36 (IYTIFKNLTIILIAYGEVLFF). The Cytoplasmic segment spans residues 37-47 (GGKVTSMELTS). Residues 48–68 (FIMMVLSSVVATWGDQQAIAI) traverse the membrane as a helical segment. The Lumenal segment spans residues 69-84 (KASSLEDLDQELVEST). A helical membrane pass occupies residues 85 to 105 (IFVLNPGYLWMFTNCISSALF). Residues 106–122 (VLIMRKRIRLTNFKDYD) lie on the Cytoplasmic side of the membrane. Residues 123-143 (TMFYNNVLALPLLLVFSFIME) form a helical membrane-spanning segment. Topologically, residues 144–159 (DWSTKNLSVNLSADSL) are lumenal. Residues asparagine 149 and asparagine 153 are each glycosylated (N-linked (GlcNAc...) asparagine). The chain crosses the membrane as a helical span at residues 160–180 (AAMVISGLMSVGISYCSGWCV). Residues 181 to 186 (RVTSST) lie on the Cytoplasmic side of the membrane. The chain crosses the membrane as a helical span at residues 187–207 (TYSMVGALNKLPIALAGLVFF). Topologically, residues 208–211 (DAPK) are lumenal. The chain crosses the membrane as a helical span at residues 212 to 232 (NFLSFFSIFLGFLSGLLYAVA). Over 233-249 (KQKKIQQQKVLAATLEK) the chain is Cytoplasmic.

It belongs to the TPT transporter family. SLC35D subfamily.

Its subcellular location is the golgi apparatus membrane. It localises to the cytoplasmic vesicle membrane. The protein localises to the endoplasmic reticulum membrane. Its function is as follows. Involved in the import of GDP-mannose from the cytoplasm into the Golgi lumen. This Saccharomyces cerevisiae (strain RM11-1a) (Baker's yeast) protein is Probable GDP-mannose transporter 2 (HVG1).